The following is a 79-amino-acid chain: Acyl carrier protein (79 aa).

The 76-residue stretch at 2 to 77 folds into the Carrier domain; the sequence is SEIGERVKKI…DATKFLEKNA (76 aa). Ser37 is modified (O-(pantetheine 4'-phosphoryl)serine).

This sequence belongs to the acyl carrier protein (ACP) family. Post-translationally, 4'-phosphopantetheine is transferred from CoA to a specific serine of apo-ACP by AcpS. This modification is essential for activity because fatty acids are bound in thioester linkage to the sulfhydryl of the prosthetic group.

The protein resides in the cytoplasm. It functions in the pathway lipid metabolism; fatty acid biosynthesis. Carrier of the growing fatty acid chain in fatty acid biosynthesis. The polypeptide is Acyl carrier protein (Nitrobacter winogradskyi (strain ATCC 25391 / DSM 10237 / CIP 104748 / NCIMB 11846 / Nb-255)).